Reading from the N-terminus, the 334-residue chain is Aspartate carbamoyltransferase catalytic subunit (334 aa).

Carbamoyl phosphate-binding residues include Arg70 and Thr71. Lys98 serves as a coordination point for L-aspartate. Arg120, His150, and Gln153 together coordinate carbamoyl phosphate. Positions 183 and 238 each coordinate L-aspartate. Residues Gly279 and Pro280 each contribute to the carbamoyl phosphate site.

This sequence belongs to the aspartate/ornithine carbamoyltransferase superfamily. ATCase family. Heterododecamer (2C3:3R2) of six catalytic PyrB chains organized as two trimers (C3), and six regulatory PyrI chains organized as three dimers (R2).

It carries out the reaction carbamoyl phosphate + L-aspartate = N-carbamoyl-L-aspartate + phosphate + H(+). Its pathway is pyrimidine metabolism; UMP biosynthesis via de novo pathway; (S)-dihydroorotate from bicarbonate: step 2/3. In terms of biological role, catalyzes the condensation of carbamoyl phosphate and aspartate to form carbamoyl aspartate and inorganic phosphate, the committed step in the de novo pyrimidine nucleotide biosynthesis pathway. This chain is Aspartate carbamoyltransferase catalytic subunit, found in Marinomonas sp. (strain MWYL1).